We begin with the raw amino-acid sequence, 275 residues long: NH(3)-dependent NAD(+) synthetase (275 aa).

46 to 53 (GISGGQDS) is a binding site for ATP. Asp-52 contacts Mg(2+). Arg-141 contacts deamido-NAD(+). Thr-161 lines the ATP pocket. Glu-166 serves as a coordination point for Mg(2+). Residues Lys-174 and Asp-181 each contribute to the deamido-NAD(+) site. The ATP site is built by Lys-190 and Thr-212. Deamido-NAD(+) is bound at residue 261–262 (HK).

Belongs to the NAD synthetase family. As to quaternary structure, homodimer.

The catalysed reaction is deamido-NAD(+) + NH4(+) + ATP = AMP + diphosphate + NAD(+) + H(+). Its pathway is cofactor biosynthesis; NAD(+) biosynthesis; NAD(+) from deamido-NAD(+) (ammonia route): step 1/1. In terms of biological role, catalyzes the ATP-dependent amidation of deamido-NAD to form NAD. Uses ammonia as a nitrogen source. This Limosilactobacillus reuteri (strain DSM 20016) (Lactobacillus reuteri) protein is NH(3)-dependent NAD(+) synthetase.